The following is a 591-amino-acid chain: Max-binding protein MNT (591 aa).

Serine 2 bears the N-acetylserine mark. Disordered regions lie at residues 17–122 (AQQQ…APRQ) and 182–223 (PGVQ…GIGT). Positions 22–44 (RAREEQERLRLEREREREQEQKR) are enriched in basic and acidic residues. Composition is skewed to pro residues over residues 63–84 (EAPP…PLAT) and 102–120 (SLPP…PLAP). Over residues 205–216 (PAEEAKSSEQKK) the composition is skewed to basic and acidic residues. Residues 222–273 (GTREVHNKLEKNRRAHLKECFETLKRNIPNVDDKKTSNLSVLRTALRYIQSL) form the bHLH domain. Residues 273 to 301 (LKRKEKEYEHEMERLAREKIATQQRLAEL) form a leucine-zipper region. Residues 321–426 (TGQPEDDQAS…PPPATPTQTL (106 aa)) are disordered. A compositionally biased stretch (acidic residues) spans 336 to 346 (EGEDNVDEEME). Residues 374–383 (STAPAPLPTH) are compositionally biased toward pro residues. Residues 390–411 (PVALSPAHLPVQQQQPPQQKTP) are compositionally biased toward low complexity. Pro residues predominate over residues 412–421 (LPAPPPPPAT).

In terms of assembly, efficient DNA binding requires dimerization with another bHLH protein. Binds DNA as a homodimer or a heterodimer with MAX.

Its subcellular location is the nucleus. In terms of biological role, binds DNA as a heterodimer with MAX and represses transcription. Binds to the canonical E box sequence 5'-CACGTG-3' and, with higher affinity, to 5'-CACGCG-3'. This Mus musculus (Mouse) protein is Max-binding protein MNT (Mnt).